Reading from the N-terminus, the 693-residue chain is Glycine--tRNA ligase beta subunit (693 aa).

It belongs to the class-II aminoacyl-tRNA synthetase family. In terms of assembly, tetramer of two alpha and two beta subunits.

The protein localises to the cytoplasm. It carries out the reaction tRNA(Gly) + glycine + ATP = glycyl-tRNA(Gly) + AMP + diphosphate. This chain is Glycine--tRNA ligase beta subunit, found in Shouchella clausii (strain KSM-K16) (Alkalihalobacillus clausii).